The following is a 586-amino-acid chain: Phosphomethylpyrimidine synthase (586 aa).

Residues 1–33 are disordered; sequence MKQSVSAEQIELKSSLPGSKKVYVDGPREGMKV. The segment covering 22–33 has biased composition (basic and acidic residues); sequence VYVDGPREGMKV. Substrate-binding positions include Asn193, Met222, Tyr251, His287, 307-309, 348-351, and Glu387; these read SRG and DGLR. His391 contributes to the Zn(2+) binding site. Tyr414 is a binding site for substrate. His455 is a binding site for Zn(2+). [4Fe-4S] cluster is bound by residues Cys535, Cys538, and Cys543.

It belongs to the ThiC family. [4Fe-4S] cluster is required as a cofactor.

The catalysed reaction is 5-amino-1-(5-phospho-beta-D-ribosyl)imidazole + S-adenosyl-L-methionine = 4-amino-2-methyl-5-(phosphooxymethyl)pyrimidine + CO + 5'-deoxyadenosine + formate + L-methionine + 3 H(+). It functions in the pathway cofactor biosynthesis; thiamine diphosphate biosynthesis. Functionally, catalyzes the synthesis of the hydroxymethylpyrimidine phosphate (HMP-P) moiety of thiamine from aminoimidazole ribotide (AIR) in a radical S-adenosyl-L-methionine (SAM)-dependent reaction. The chain is Phosphomethylpyrimidine synthase from Bacillus cereus (strain B4264).